The following is a 208-amino-acid chain: Photosystem I reaction center subunit II-1, chloroplastic (208 aa).

A chloroplast-targeting transit peptide spans 1–45 (MATQAAGIFNSAITTAATSGVKKLHFFSTTHRPKSLSFTKTAIRA). Thr-48 bears the Phosphothreonine mark. Residues 49–72 (DSSAAAAAAPATKEAPVGFTPPQL) form a disordered region. Residues 50–64 (SSAAAAAAPATKEAP) show a composition bias toward low complexity. The tract at residues 141-149 (RLRSKYKIT) is ferredoxin and ferredoxin-oxidoreductase binding.

The protein belongs to the PsaD family. Interacts with PGRL1A and PGRL1B. In terms of processing, phosphorylated by a threonine specific thylakoid kinase in a light activated and redox-dependent manner.

It localises to the plastid. Its subcellular location is the chloroplast thylakoid membrane. PsaD can form complexes with ferredoxin and ferredoxin-oxidoreductase in photosystem I (PS I) reaction center. PSAD may encode the ferredoxin-docking protein. This Arabidopsis thaliana (Mouse-ear cress) protein is Photosystem I reaction center subunit II-1, chloroplastic (psaD1).